The sequence spans 132 residues: Glycine cleavage system H protein (132 aa).

The Lipoyl-binding domain maps to 24-106; it reads TVRVGLTDFA…YGAGWLLDVH (83 aa). Residue Lys65 is modified to N6-lipoyllysine.

Belongs to the GcvH family. In terms of assembly, the glycine cleavage system is composed of four proteins: P, T, L and H. (R)-lipoate serves as cofactor.

Its function is as follows. The glycine cleavage system catalyzes the degradation of glycine. The H protein shuttles the methylamine group of glycine from the P protein to the T protein. In Mycobacterium leprae (strain Br4923), this protein is Glycine cleavage system H protein.